Reading from the N-terminus, the 54-residue chain is Ovomucoid (54 aa).

The 51-residue stretch at valine 4–cysteine 54 folds into the Kazal-like domain. Cystine bridges form between cysteine 6-cysteine 36, cysteine 14-cysteine 33, and cysteine 22-cysteine 54. An N-linked (GlcNAc...) asparagine glycan is attached at asparagine 43.

It localises to the secreted. This chain is Ovomucoid, found in Carpococcyx renauldi (Coral-billed ground-cuckoo).